Reading from the N-terminus, the 658-residue chain is Glycogen debranching enzyme (658 aa).

Catalysis depends on aspartate 336, which acts as the Nucleophile. The active-site Proton donor is the glutamate 371. The interval 459 to 483 is disordered; sequence EANGEENRDGTNSNYSDNHGKEGLG.

The protein belongs to the glycosyl hydrolase 13 family.

The catalysed reaction is Hydrolysis of (1-&gt;6)-alpha-D-glucosidic linkages to branches with degrees of polymerization of three or four glucose residues in limit dextrin.. Its pathway is glycan degradation; glycogen degradation. Its function is as follows. Removes maltotriose and maltotetraose chains that are attached by 1,6-alpha-linkage to the limit dextrin main chain, generating a debranched limit dextrin. This is Glycogen debranching enzyme from Salmonella agona (strain SL483).